Reading from the N-terminus, the 989-residue chain is SWI/SNF-related matrix-associated actin-dependent regulator of chromatin subfamily A containing DEAD/H box 1 homolog (989 aa).

Residues 1–288 (MSTTSDFQTG…RRAKRGETKN (288 aa)) form a disordered region. Residues 72–105 (DDDDEDYVDETMPSEDEEDFDNNEEDEDDDDYEE) are compositionally biased toward acidic residues. The span at 109 to 120 (RKRKAPSKKKLV) shows a compositional bias: basic residues. Residues 124–140 (ENYRREDSETPEPEMKR) are compositionally biased toward basic and acidic residues. The span at 187 to 200 (DDESEDDFINDEEI) shows a compositional bias: acidic residues. Basic and acidic residues-rich tracts occupy residues 201–221 (SEKGSGKGSEKEESEGSGKDS) and 241–250 (AQKEQKKKAE). Over residues 251-276 (SDEDWEEDEDDMNADGDETPSDDSDI) the composition is skewed to acidic residues. The segment covering 277–288 (EERRAKRGETKN) has biased composition (basic and acidic residues). Residues 406 to 574 (IMMYNKDLNA…ISLMYFVLSK (169 aa)) enclose the Helicase ATP-binding domain. 419–426 (DEMGLGKT) provides a ligand contact to ATP. The DEGH box motif lies at 525–528 (DEGH). One can recognise a Helicase C-terminal domain in the interval 757–912 (QLDVMLPEIQ…GVKGQLDEDA (156 aa)). Residues 941–989 (RYDDVEDDSGDSKNGIDAEEAAKKEDEAVKEPVEKEQQKEEESQPSTSA) form a disordered region. The segment covering 950-982 (GDSKNGIDAEEAAKKEDEAVKEPVEKEQQKEEE) has biased composition (basic and acidic residues).

The protein belongs to the SNF2/RAD54 helicase family.

It localises to the nucleus. It is found in the chromosome. It carries out the reaction ATP + H2O = ADP + phosphate + H(+). In terms of biological role, DNA helicase that possesses intrinsic ATP-dependent nucleosome-remodeling activity and is both required for DNA repair and heterochromatin organization. Promotes DNA end resection of double-strand breaks (DSBs) following DNA damage: probably acts by weakening histone DNA interactions in nucleosomes flanking DSBs. The polypeptide is SWI/SNF-related matrix-associated actin-dependent regulator of chromatin subfamily A containing DEAD/H box 1 homolog (Caenorhabditis elegans).